The primary structure comprises 27 residues: MIDKAIIVLGALIALLELIRFLLQLLN.

A helical membrane pass occupies residues I6–L26.

This sequence belongs to the DinQ family.

It is found in the cell inner membrane. This is an uncharacterized protein from Escherichia coli (strain K12).